We begin with the raw amino-acid sequence, 106 residues long: Valine dehydrogenase (106 aa).

Residue Lys91 is part of the active site.

Belongs to the Glu/Leu/Phe/Val dehydrogenases family. As to quaternary structure, homodimer.

Its subcellular location is the cytoplasm. It carries out the reaction L-valine + NAD(+) + H2O = 3-methyl-2-oxobutanoate + NH4(+) + NADH + H(+). The protein operates within amino-acid degradation; L-valine degradation. Oxidative deamination of branched-chain amino acids. The catabolism of valine is the major source of fatty acid precursors for macrolide biosynthesis and a vital source of antibiotic precursors. In Streptomyces ambofaciens, this protein is Valine dehydrogenase (vdh).